We begin with the raw amino-acid sequence, 314 residues long: GTPase Era (314 aa).

In terms of domain architecture, Era-type G spans 7–188 (RCGFAAVIGS…REFIAGLMPE (182 aa)). The G1 stretch occupies residues 15-22 (GSPNAGKS). 15-22 (GSPNAGKS) is a binding site for GTP. The interval 41 to 45 (QTTRF) is G2. The interval 62–65 (DTPG) is G3. GTP contacts are provided by residues 62 to 66 (DTPGV) and 138 to 141 (NKVD). A G4 region spans residues 138–141 (NKVD). Residues 167 to 169 (ISA) are G5. The 78-residue stretch at 219 to 296 (LHEELPYASM…HLFLNVKVDA (78 aa)) folds into the KH type-2 domain.

The protein belongs to the TRAFAC class TrmE-Era-EngA-EngB-Septin-like GTPase superfamily. Era GTPase family. Monomer.

It localises to the cytoplasm. The protein resides in the cell inner membrane. Functionally, an essential GTPase that binds both GDP and GTP, with rapid nucleotide exchange. Plays a role in 16S rRNA processing and 30S ribosomal subunit biogenesis and possibly also in cell cycle regulation and energy metabolism. The polypeptide is GTPase Era (Maricaulis maris (strain MCS10) (Caulobacter maris)).